The following is a 76-amino-acid chain: Conotoxin Am6.3 (76 aa).

Positions 1–22 are cleaved as a signal peptide; the sequence is MKLTCMMIIAVLFLTAWTFATA. 3 cysteine pairs are disulfide-bonded: C52–C67, C59–C71, and C66–C75.

Belongs to the conotoxin O1 superfamily. Is not hydroxylated. In terms of tissue distribution, expressed by the venom duct.

The protein resides in the secreted. Functionally, probable toxin that inhibits ion channels. The polypeptide is Conotoxin Am6.3 (Conus amadis (Amadis cone)).